A 600-amino-acid polypeptide reads, in one-letter code: Integrator complex subunit 11 (600 aa).

6 residues coordinate Zn(2+): histidine 68, histidine 70, aspartate 72, histidine 73, histidine 157, and aspartate 178. The short motif at histidine 68–histidine 73 is the HXHXDH motif element. The active site involves glutamate 203. Residue lysine 381 forms a Glycyl lysine isopeptide (Lys-Gly) (interchain with G-Cter in SUMO) linkage. Histidine 414 lines the Zn(2+) pocket. Residues lysine 462 and lysine 475 each participate in a glycyl lysine isopeptide (Lys-Gly) (interchain with G-Cter in SUMO) cross-link. The short motif at leucine 469 to leucine 479 is the Nuclear localization signal element.

This sequence belongs to the metallo-beta-lactamase superfamily. RNA-metabolizing metallo-beta-lactamase-like family. INTS11 subfamily. In terms of assembly, component of the Integrator complex, composed of core subunits INTS1, INTS2, INTS3, INTS4, INTS5, INTS6, INTS7, INTS8, INTS9/RC74, INTS10, INTS11/CPSF3L, INTS12, INTS13, INTS14 and INTS15. The core complex associates with protein phosphatase 2A subunits PPP2CA and PPP2R1A, to form the Integrator-PP2A (INTAC) complex. INTS11 is part of the RNA endonuclease subcomplex, composed of INTS4, INTS9, INTS11 and inositol hexakisphosphate (InsP6). Interacts with WDR73; interaction is required for the assembly of the RNA endonuclease subcomplex in the cytoplasm. Interacts with BRAT1; interaction is required for the assembly of the RNA endonuclease subcomplex and inhibits the endonuclease activity of INTS11 before formation of mature integrator complex. Zn(2+) is required as a cofactor. In terms of processing, sumoylated; sumoylation regulates its subcellular location and is required for integrator complex integrity.

The protein resides in the nucleus. It localises to the cytoplasm. With respect to regulation, the RNA endonuclease activity is inhibited by BRAT1 that forms hyrogen bond and hydrophobic interactions with the active site. In terms of biological role, RNA endonuclease component of the integrator complex, a multiprotein complex that terminates RNA polymerase II (Pol II) transcription in the promoter-proximal region of genes. The integrator complex provides a quality checkpoint during transcription elongation by driving premature transcription termination of transcripts that are unfavorably configured for transcriptional elongation: the complex terminates transcription by (1) catalyzing dephosphorylation of the C-terminal domain (CTD) of Pol II subunit POLR2A/RPB1 and SUPT5H/SPT5, (2) degrading the exiting nascent RNA transcript via endonuclease activity and (3) promoting the release of Pol II from bound DNA. The integrator complex is also involved in terminating the synthesis of non-coding Pol II transcripts, such as enhancer RNAs (eRNAs), small nuclear RNAs (snRNAs), telomerase RNAs and long non-coding RNAs (lncRNAs). Within the integrator complex, INTS11 constitutes the RNA endonuclease subunit that degrades exiting nascent RNA transcripts. Mediates recruitment of cytoplasmic dynein to the nuclear envelope, probably as component of the integrator complex. The polypeptide is Integrator complex subunit 11 (Ints11) (Rattus norvegicus (Rat)).